The primary structure comprises 726 residues: MAVGEPLVHIRVTLLLLWFGMFLSISGHSQARPSQYFTSPEVVIPLKVISRGRGAKAPGWLSYSLRFGGQRYIVHMRVNKLLFAAHLPVFTYTEQHALLQDQPFIQDDCYYHGYVEGVPESLVALSTCSGGFLGMLQINDLVYEIKPISVSATFEHLVYKIDSDDTQFPPMRCGLTEEKIAHQMELQLSYNFTLKQSSFVGWWTHQRFVELVVVVDNIRYLFSQSNATTVQHEVFNVVNIVDSFYHPLEVDVILTGIDIWTASNPLPTSGDLDNVLEDFSIWKNYNLNNRLQHDVAHLFIKDTQGMKLGVAYVKGICQNPFNTGVDVFEDNRLVVFAITLGHELGHNLGMQHDTQWCVCELQWCIMHAYRKVTTKFSNCSYAQYWDSTISSGLCIQPPPYPGNIFRLKYCGNLVVEEGEECDCGTIRQCAKDPCCLLNCTLHPGAACAFGICCKDCKFLPSGTLCRQQVGECDLPEWCNGTSHQCPDDVYVQDGISCNVNAFCYEKTCNNHDIQCKEIFGQDARSASQSCYQEINTQGNRFGHCGIVGTTYVKCWTPDIMCGRVQCENVGVIPNLIEHSTVQQFHLNDTTCWGTDYHLGMAIPDIGEVKDGTVCGPEKICIRKKCASMVHLSQACQPKTCNMRGICNNKQHCHCNHEWAPPYCKDKGYGGSADSGPPPKNNMEGLNVMGKLRYLSLLCLLPLVAFLLFCLHVLFKKRTKSKEDEEG.

Positions 1–31 (MAVGEPLVHIRVTLLLLWFGMFLSISGHSQA) are cleaved as a signal peptide. Residues 32–206 (RPSQYFTSPE…SSFVGWWTHQ (175 aa)) constitute a propeptide that is removed on maturation. The short motif at 171-178 (MRCGLTEE) is the Cysteine switch element. C173 serves as a coordination point for Zn(2+). N-linked (GlcNAc...) asparagine glycans are attached at residues N191 and N226. The region spanning 207-400 (RFVELVVVVD…SGLCIQPPPY (194 aa)) is the Peptidase M12B domain. Over 207–693 (RFVELVVVVD…GLNVMGKLRY (487 aa)) the chain is Extracellular. Intrachain disulfides connect C317–C394, C357–C379, and C359–C364. H342 lines the Zn(2+) pocket. The active site involves E343. Positions 346 and 352 each coordinate Zn(2+). N378, N438, N479, and N587 each carry an N-linked (GlcNAc...) asparagine glycan. Residues 407–493 (LKYCGNLVVE…QCPDDVYVQD (87 aa)) form the Disintegrin domain. C465 and C485 are joined by a disulfide. Disulfide bonds link C635–C646, C640–C652, and C654–C663. One can recognise an EGF-like domain in the interval 635 to 663 (CQPKTCNMRGICNNKQHCHCNHEWAPPYC). The chain crosses the membrane as a helical span at residues 694 to 714 (LSLLCLLPLVAFLLFCLHVLF). Over 715-726 (KKRTKSKEDEEG) the chain is Cytoplasmic.

The cofactor is Zn(2+). Has no obvious cleavage site for furin endopeptidase, suggesting that the proteolytic processing is regulated. As to expression, testis specific.

The protein localises to the membrane. In terms of biological role, may be involved in sperm maturation and/or fertilization. This is Disintegrin and metalloproteinase domain-containing protein 20 (ADAM20) from Homo sapiens (Human).